An 872-amino-acid polypeptide reads, in one-letter code: Alanine--tRNA ligase (872 aa).

Positions 567, 571, 669, and 673 each coordinate Zn(2+).

This sequence belongs to the class-II aminoacyl-tRNA synthetase family. Zn(2+) is required as a cofactor.

The protein resides in the cytoplasm. The enzyme catalyses tRNA(Ala) + L-alanine + ATP = L-alanyl-tRNA(Ala) + AMP + diphosphate. Its function is as follows. Catalyzes the attachment of alanine to tRNA(Ala) in a two-step reaction: alanine is first activated by ATP to form Ala-AMP and then transferred to the acceptor end of tRNA(Ala). Also edits incorrectly charged Ser-tRNA(Ala) and Gly-tRNA(Ala) via its editing domain. This is Alanine--tRNA ligase from Streptococcus pneumoniae (strain CGSP14).